Here is a 120-residue protein sequence, read N- to C-terminus: Large ribosomal subunit protein uL24 (120 aa).

A disordered region spans residues 1 to 26 (MSKQPDKQRKSQRRAPLHERHKQVRA). The span at 10-24 (KSQRRAPLHERHKQV) shows a compositional bias: basic residues.

Belongs to the universal ribosomal protein uL24 family. In terms of assembly, part of the 50S ribosomal subunit. Interacts weakly with protein L4.

Functionally, one of two assembly initiator proteins, it binds directly to the 5'-end of the 23S rRNA, where it nucleates assembly of the 50S subunit. Its function is as follows. Stabilizes the tertiary rRNA structure within the 23S rRNA domain (domain I) to which it binds. Located at the polypeptide exit tunnel on the outside of the subunit. The sequence is that of Large ribosomal subunit protein uL24 (rpl24) from Haloarcula marismortui (strain ATCC 43049 / DSM 3752 / JCM 8966 / VKM B-1809) (Halobacterium marismortui).